We begin with the raw amino-acid sequence, 412 residues long: Probable tRNA pseudouridine synthase D (412 aa).

The Nucleophile role is filled by aspartate 97. Residues 167–370 form the TRUD domain; that stretch reads ALPNYYGYQR…YGGYRKVVLT (204 aa).

This sequence belongs to the pseudouridine synthase TruD family.

It carries out the reaction uridine(13) in tRNA = pseudouridine(13) in tRNA. Functionally, could be responsible for synthesis of pseudouridine from uracil-13 in transfer RNAs. This chain is Probable tRNA pseudouridine synthase D, found in Pyrobaculum islandicum (strain DSM 4184 / JCM 9189 / GEO3).